The primary structure comprises 89 residues: NADH-ubiquinone oxidoreductase chain 4L (89 aa).

The next 3 membrane-spanning stretches (helical) occupy residues 1–21 (MNLS…NRKN), 22–42 (IILM…LILI), and 55–75 (FAIY…GILV).

This sequence belongs to the complex I subunit 4L family.

Its subcellular location is the mitochondrion membrane. It carries out the reaction a ubiquinone + NADH + 5 H(+)(in) = a ubiquinol + NAD(+) + 4 H(+)(out). In terms of biological role, core subunit of the mitochondrial membrane respiratory chain NADH dehydrogenase (Complex I) that is believed to belong to the minimal assembly required for catalysis. Complex I functions in the transfer of electrons from NADH to the respiratory chain. The immediate electron acceptor for the enzyme is believed to be ubiquinone. This is NADH-ubiquinone oxidoreductase chain 4L (ND4L) from Trichophyton rubrum (Athlete's foot fungus).